The primary structure comprises 111 residues: MEAKAIGKTIRIAPRKVRLVVDLIRGKNVKEAQAILMFTPRGASPVIAKVLDSAIANATHNLNLNPENLFVKEVWANESITMKRMLPRAKGSGHLIRKRTSHITVVVAERE.

The protein belongs to the universal ribosomal protein uL22 family. In terms of assembly, part of the 50S ribosomal subunit.

This protein binds specifically to 23S rRNA; its binding is stimulated by other ribosomal proteins, e.g. L4, L17, and L20. It is important during the early stages of 50S assembly. It makes multiple contacts with different domains of the 23S rRNA in the assembled 50S subunit and ribosome. In terms of biological role, the globular domain of the protein is located near the polypeptide exit tunnel on the outside of the subunit, while an extended beta-hairpin is found that lines the wall of the exit tunnel in the center of the 70S ribosome. This Acholeplasma laidlawii (strain PG-8A) protein is Large ribosomal subunit protein uL22.